The chain runs to 1710 residues: Phosphatidylinositol 4-phosphate 5-kinase (1710 aa).

The EF-hand domain occupies 68–98 (YKSIFKAFDLNNDNYLDFYEFCVAINIMLKG). Residues D76, N78, D80, Y82, and E87 each contribute to the Ca(2+) site. Disordered stretches follow at residues 139–255 (NNMN…DPIN), 427–479 (KQKK…IKSV), and 895–993 (GEGH…HNNN). A compositionally biased stretch (low complexity) spans 140 to 235 (NMNGDNINGD…HNNNSHNNNN (96 aa)). Positions 236-248 (KAENSLGQPLNEK) are enriched in polar residues. Residues 427 to 444 (KQKKKKKKKKKKKKKKEK) are compositionally biased toward basic residues. The segment covering 456 to 468 (SSSMENKSQNKSQ) has biased composition (low complexity). Residues 902–973 (EEEEKNDDEE…DDNDDNDDND (72 aa)) are compositionally biased toward acidic residues. The span at 974–987 (EKSNIKIENKKDVP) shows a compositional bias: basic and acidic residues. Residues 1334-1709 (QKKTFHRILA…RFVTFIENHM (376 aa)) enclose the PIPK domain.

It carries out the reaction a 1,2-diacyl-sn-glycero-3-phospho-(1D-myo-inositol 4-phosphate) + ATP = a 1,2-diacyl-sn-glycero-3-phospho-(1D-myo-inositol-4,5-bisphosphate) + ADP + H(+). With respect to regulation, catalytic activity is increase by myristoylated ARF1. Phosphatidic acid has no effect on catalytic activity. Functionally, catalyzes the phosphorylation of phosphatidylinositol 4-phosphate (PtdIns(4)P/PI4P) to form phosphatidylinositol 4,5-bisphosphate (PtdIns(4,5)P2/PIP2), a lipid second messenger that regulates several cellular processes. This chain is Phosphatidylinositol 4-phosphate 5-kinase, found in Plasmodium falciparum (isolate 3D7).